We begin with the raw amino-acid sequence, 246 residues long: Probable septum site-determining protein MinC (246 aa).

Belongs to the MinC family. As to quaternary structure, interacts with MinD and FtsZ.

In terms of biological role, cell division inhibitor that blocks the formation of polar Z ring septums. Rapidly oscillates between the poles of the cell to destabilize FtsZ filaments that have formed before they mature into polar Z rings. Prevents FtsZ polymerization. This Pseudomonas savastanoi pv. phaseolicola (strain 1448A / Race 6) (Pseudomonas syringae pv. phaseolicola (strain 1448A / Race 6)) protein is Probable septum site-determining protein MinC.